A 127-amino-acid chain; its full sequence is Small ribosomal subunit protein bS6 (127 aa).

The disordered stretch occupies residues 104-127 (QGAEKGKSSRKEKVAAEAEASEEA). Basic and acidic residues predominate over residues 107–119 (EKGKSSRKEKVAA).

The protein belongs to the bacterial ribosomal protein bS6 family.

Functionally, binds together with bS18 to 16S ribosomal RNA. This is Small ribosomal subunit protein bS6 from Coxiella burnetii (strain CbuG_Q212) (Coxiella burnetii (strain Q212)).